The following is a 299-amino-acid chain: MDPEGLAHLLPPATLAALADSWLREDCPGLNYVALVSGTAPSQAVLWAKSPGVLAGRPFLDAIFAQVNCQVSWFLPEGSKLVPVAKVAEVRGPAHCLLLGERVALNTLARCSGVASMAAAAVETARGTGWAGHVAGTRKTTPGFRLVEKYGLLVGGAAAHRYDLGGLVMVKDNHVMAAGGVKKAVRAARRAADFALKVEVECSSLQEAVEAAEAGADLVLLDNFRPEELHPTAATLKAQFPSVSVEASGGVRLDNLPQFCGPHIDVISLGMLTQAAPALDFSLKLFAEGATPVPHARRS.

Positions 8–12 (HLLPP) are important for hexamer formation. Quinolinate-binding positions include R102, 138-139 (RK), 160-161 (HR), K171, E201, D222, 248-250 (SGG), and G270. T291 carries the phosphothreonine modification.

This sequence belongs to the NadC/ModD family. As to quaternary structure, hexamer formed by 3 homodimers.

The catalysed reaction is nicotinate beta-D-ribonucleotide + CO2 + diphosphate = quinolinate + 5-phospho-alpha-D-ribose 1-diphosphate + 2 H(+). It participates in cofactor biosynthesis; NAD(+) biosynthesis; nicotinate D-ribonucleotide from quinolinate: step 1/1. Its function is as follows. Involved in the catabolism of quinolinic acid (QA). This Bos taurus (Bovine) protein is Nicotinate-nucleotide pyrophosphorylase [carboxylating] (QPRT).